A 457-amino-acid chain; its full sequence is tRNA-2-methylthio-N(6)-dimethylallyladenosine synthase (457 aa).

The region spanning 3 to 120 is the MTTase N-terminal domain; that stretch reads KKVYVKTFGC…LPQMIDARRE (118 aa). [4Fe-4S] cluster is bound by residues Cys-12, Cys-49, Cys-83, Cys-157, Cys-161, and Cys-164. The Radical SAM core domain occupies 143–377; the sequence is RVEGPSAFVS…QATIEENVAR (235 aa). Residues 380-447 form the TRAM domain; sequence QSMLGKVERI…PHSLRGELVL (68 aa).

The protein belongs to the methylthiotransferase family. MiaB subfamily. Monomer. It depends on [4Fe-4S] cluster as a cofactor.

It is found in the cytoplasm. It carries out the reaction N(6)-dimethylallyladenosine(37) in tRNA + (sulfur carrier)-SH + AH2 + 2 S-adenosyl-L-methionine = 2-methylsulfanyl-N(6)-dimethylallyladenosine(37) in tRNA + (sulfur carrier)-H + 5'-deoxyadenosine + L-methionine + A + S-adenosyl-L-homocysteine + 2 H(+). Catalyzes the methylthiolation of N6-(dimethylallyl)adenosine (i(6)A), leading to the formation of 2-methylthio-N6-(dimethylallyl)adenosine (ms(2)i(6)A) at position 37 in tRNAs that read codons beginning with uridine. This Burkholderia mallei (strain NCTC 10247) protein is tRNA-2-methylthio-N(6)-dimethylallyladenosine synthase.